The following is a 109-amino-acid chain: Probable WRKY transcription factor 43 (109 aa).

Residues 24–89 (SDADILDDGY…YEGIHNHPCE (66 aa)) constitute a DNA-binding region (WRKY).

This sequence belongs to the WRKY group II-c family.

The protein resides in the nucleus. Transcription factor. Interacts specifically with the W box (5'-(T)TGAC[CT]-3'), a frequently occurring elicitor-responsive cis-acting element. This Arabidopsis thaliana (Mouse-ear cress) protein is Probable WRKY transcription factor 43 (WRKY43).